The primary structure comprises 172 residues: Endoribonuclease YbeY (172 aa).

His134, His138, and His144 together coordinate Zn(2+).

This sequence belongs to the endoribonuclease YbeY family. Zn(2+) serves as cofactor.

It localises to the cytoplasm. Its function is as follows. Single strand-specific metallo-endoribonuclease involved in late-stage 70S ribosome quality control and in maturation of the 3' terminus of the 16S rRNA. The sequence is that of Endoribonuclease YbeY from Burkholderia cenocepacia (strain HI2424).